The sequence spans 1066 residues: MSFNDPFSILFGNGGDSRRNNANNDDPIILDVEADGDGPARNTNAGPSGSSRPPRGPANPRITRKPASGGSGGSRGSKILIGVVLALAIIVGLFFGLSRFITDLMWYGQLGFQSVVWTQLGVKIGLWVAYALLMALTGFVSAWLAIRARPDSADGSTIRINGDVVEVGKSVSSKTARRVAVVISLIVGVIFGSQFNANWSEILLMFNAQSFGTTDPQFGLDNGFYVFVLPGLKLVLAAVAMLLGVGLVFSVVTHVLMGGIRITMPVNGRGLFSITKRCRRQLGIWLMLNMFAWAVRQMIGVFDQLTVQGSRITGASYTAVHANIPVTFIMAALTAILGVVLGIWLMRSHTLEGQASIGVRASAALKAWRVPVTSIAVVVVVGLVLTVAWPVLLQRFRVNPNAQEMESTYIQRNIDATRAAYGLDKLKTEQYKVTDKGEQGALAKEGDTTAQIRLLDPQVVSPTFKQLQQSKQYYTFADTLAVDKYEIDGVSQDTVIAARELDLAGNDNRNWVNDHTVYTHGYGVVAAYGNKVTADGQPEFFESGIPTQGKLTESEKYEPRIYFSPNTTEYSIVGAPEGTQAWEFDYPTGSEGALTTFKGDGGPSVGNLFSRILYAIRFGSDQILFSDRVTSESQILYDRSPKERVAKVAPYLTLDGRVYPAVVDGRVKWIVDGYTTSDAYPYSQMTDLGSATKDSTTVSSATVSSLGSQKANYIRNSVKATVDAYDGSVDLYVWDQSDPVIKAWEKIFPGQYHQLSDISGDLMSHMRYPESLFKVQRELLSKYHVTSANQYYSGEDFWQTPVDPTESQSQQDQDILQPPYYLTLQTGGTKEPVFSLSSTYIPAGQSTREILTGFLSVDSDAGNEKGKIGSNYGTIRLQELPKDSNVPGPGQAQNNFNANADVSKELNLLQSGDTQVVRGNLLTLPLGGGLVYVQPVYVKSSGATSFPLLKKTLVAFGDQVGFADTLDEALDQVFGGDSGAAAGDAENVSGDQSGSDTNGGQSGTTDGKSDSGSSSDRSPELQQALNDAAQAMKDSQSAMKNGDWTAYGKAQQELEDALNKAIELDK.

The disordered stretch occupies residues 12 to 74; it reads GNGGDSRRNN…KPASGGSGGS (63 aa). The segment covering 44–61 has biased composition (low complexity); sequence NAGPSGSSRPPRGPANPR. 7 consecutive transmembrane segments (helical) span residues 77–97, 126–146, 179–199, 235–255, 282–302, 326–346, and 372–392; these read SKIL…FFGL, LWVA…WLAI, VAVV…NANW, VLAA…VTHV, LGIW…IGVF, VTFI…IWLM, and VTSI…WPVL. The disordered stretch occupies residues 977-1044; that stretch reads DSGAAAGDAE…SQSAMKNGDW (68 aa). Residues 989-998 are compositionally biased toward polar residues; sequence SGDQSGSDTN. The segment covering 1003 to 1016 has biased composition (low complexity); it reads GTTDGKSDSGSSSD.

Belongs to the UPF0182 family.

The protein localises to the cell membrane. This Bifidobacterium longum (strain NCC 2705) protein is UPF0182 protein BL1029.